We begin with the raw amino-acid sequence, 256 residues long: Small ribosomal subunit protein eS1 (256 aa).

Residues 1–18 (MAVGKNKRLSKGKKGLKK) are compositionally biased toward basic residues. Positions 1–22 (MAVGKNKRLSKGKKGLKKKTQD) are disordered. Ala2 carries the N-acetylalanine; partial modification.

Belongs to the eukaryotic ribosomal protein eS1 family. In terms of assembly, component of the small ribosomal subunit (SSU). Mature N.crassa ribosomes consist of a small (40S) and a large (60S) subunit. The 40S small subunit contains 1 molecule of ribosomal RNA (18S rRNA) and at least 32 different proteins. The large 60S subunit contains 3 rRNA molecules (26S, 5.8S and 5S rRNA) and at least 42 different proteins.

The protein resides in the cytoplasm. Component of the ribosome, a large ribonucleoprotein complex responsible for the synthesis of proteins in the cell. The small ribosomal subunit (SSU) binds messenger RNAs (mRNAs) and translates the encoded message by selecting cognate aminoacyl-transfer RNA (tRNA) molecules. The large subunit (LSU) contains the ribosomal catalytic site termed the peptidyl transferase center (PTC), which catalyzes the formation of peptide bonds, thereby polymerizing the amino acids delivered by tRNAs into a polypeptide chain. The nascent polypeptides leave the ribosome through a tunnel in the LSU and interact with protein factors that function in enzymatic processing, targeting, and the membrane insertion of nascent chains at the exit of the ribosomal tunnel. This chain is Small ribosomal subunit protein eS1 (rps1), found in Neurospora crassa (strain ATCC 24698 / 74-OR23-1A / CBS 708.71 / DSM 1257 / FGSC 987).